A 498-amino-acid polypeptide reads, in one-letter code: Probable malate:quinone oxidoreductase 2 (498 aa).

The protein belongs to the MQO family. FAD is required as a cofactor.

The enzyme catalyses (S)-malate + a quinone = a quinol + oxaloacetate. Its pathway is carbohydrate metabolism; tricarboxylic acid cycle; oxaloacetate from (S)-malate (quinone route): step 1/1. The chain is Probable malate:quinone oxidoreductase 2 from Staphylococcus aureus (strain COL).